We begin with the raw amino-acid sequence, 428 residues long: Glutamate-1-semialdehyde 2,1-aminomutase (428 aa).

Lys267 carries the N6-(pyridoxal phosphate)lysine modification.

It belongs to the class-III pyridoxal-phosphate-dependent aminotransferase family. HemL subfamily. In terms of assembly, homodimer. It depends on pyridoxal 5'-phosphate as a cofactor.

It localises to the cytoplasm. It carries out the reaction (S)-4-amino-5-oxopentanoate = 5-aminolevulinate. The protein operates within porphyrin-containing compound metabolism; protoporphyrin-IX biosynthesis; 5-aminolevulinate from L-glutamyl-tRNA(Glu): step 2/2. It functions in the pathway porphyrin-containing compound metabolism; chlorophyll biosynthesis. The sequence is that of Glutamate-1-semialdehyde 2,1-aminomutase from Prochlorococcus marinus (strain NATL1A).